Here is a 611-residue protein sequence, read N- to C-terminus: Dihydroxy-acid dehydratase (611 aa).

D82 serves as a coordination point for Mg(2+). A [2Fe-2S] cluster-binding site is contributed by C123. Mg(2+) is bound by residues D124 and K125. An N6-carboxylysine modification is found at K125. C192 contributes to the [2Fe-2S] cluster binding site. E489 provides a ligand contact to Mg(2+). Residue S515 is the Proton acceptor of the active site. The segment covering 565–574 (ERRKAEEARG) has biased composition (basic and acidic residues). The disordered stretch occupies residues 565 to 586 (ERRKAEEARGKKAFTPPTRQRE).

The protein belongs to the IlvD/Edd family. As to quaternary structure, homodimer. Requires [2Fe-2S] cluster as cofactor. Mg(2+) is required as a cofactor.

The enzyme catalyses (2R)-2,3-dihydroxy-3-methylbutanoate = 3-methyl-2-oxobutanoate + H2O. It catalyses the reaction (2R,3R)-2,3-dihydroxy-3-methylpentanoate = (S)-3-methyl-2-oxopentanoate + H2O. It functions in the pathway amino-acid biosynthesis; L-isoleucine biosynthesis; L-isoleucine from 2-oxobutanoate: step 3/4. The protein operates within amino-acid biosynthesis; L-valine biosynthesis; L-valine from pyruvate: step 3/4. Its function is as follows. Functions in the biosynthesis of branched-chain amino acids. Catalyzes the dehydration of (2R,3R)-2,3-dihydroxy-3-methylpentanoate (2,3-dihydroxy-3-methylvalerate) into 2-oxo-3-methylpentanoate (2-oxo-3-methylvalerate) and of (2R)-2,3-dihydroxy-3-methylbutanoate (2,3-dihydroxyisovalerate) into 2-oxo-3-methylbutanoate (2-oxoisovalerate), the penultimate precursor to L-isoleucine and L-valine, respectively. In Parabacteroides distasonis (strain ATCC 8503 / DSM 20701 / CIP 104284 / JCM 5825 / NCTC 11152), this protein is Dihydroxy-acid dehydratase.